We begin with the raw amino-acid sequence, 264 residues long: U1 snRNP-associated protein usp106 (264 aa).

The stretch at 83–126 (DYLEDLERHVDDCNKRIDIAEARREKTKEEEERIDELMRDIIHT) forms a coiled coil. The segment covering 233–258 (EDREKSRDKKDGEKQRDNLASFEDKI) has biased composition (basic and acidic residues). The tract at residues 233 to 264 (EDREKSRDKKDGEKQRDNLASFEDKISTSFVA) is disordered.

It belongs to the Luc7 family. As to quaternary structure, component of the U1 snRNP particle, a subcomplex of the spliceosome.

It localises to the cytoplasm. The protein resides in the nucleus. Component of the U1 snRNP particle, which recognizes and binds the 5'-splice site of pre-mRNA. Together with other non-snRNP factors, U1 snRNP forms the spliceosomal commitment complex, that targets pre-mRNA to the splicing pathway. The protein is U1 snRNP-associated protein usp106 (usp106) of Schizosaccharomyces pombe (strain 972 / ATCC 24843) (Fission yeast).